Here is a 363-residue protein sequence, read N- to C-terminus: NAD(P)H-quinone oxidoreductase subunit 1, chloroplastic (363 aa).

The next 6 helical transmembrane spans lie at 30-50, 98-118, 129-149, 248-268, 300-320, and 336-356; these read LVPI…IVWL, FSIG…IIPF, IGVF…LMSG, YSGI…LVSS, VFGT…FLFI, and LLNL…LLTT.

This sequence belongs to the complex I subunit 1 family. NDH is composed of at least 16 different subunits, 5 of which are encoded in the nucleus.

The protein localises to the plastid. The protein resides in the chloroplast thylakoid membrane. It catalyses the reaction a plastoquinone + NADH + (n+1) H(+)(in) = a plastoquinol + NAD(+) + n H(+)(out). The enzyme catalyses a plastoquinone + NADPH + (n+1) H(+)(in) = a plastoquinol + NADP(+) + n H(+)(out). Functionally, NDH shuttles electrons from NAD(P)H:plastoquinone, via FMN and iron-sulfur (Fe-S) centers, to quinones in the photosynthetic chain and possibly in a chloroplast respiratory chain. The immediate electron acceptor for the enzyme in this species is believed to be plastoquinone. Couples the redox reaction to proton translocation, and thus conserves the redox energy in a proton gradient. The chain is NAD(P)H-quinone oxidoreductase subunit 1, chloroplastic from Vitis vinifera (Grape).